The sequence spans 453 residues: Phosphoglucosamine mutase (453 aa).

Serine 105 serves as the catalytic Phosphoserine intermediate. Mg(2+) is bound by residues serine 105, aspartate 244, aspartate 246, and aspartate 248. Position 105 is a phosphoserine (serine 105).

Belongs to the phosphohexose mutase family. Mg(2+) serves as cofactor. In terms of processing, activated by phosphorylation.

It catalyses the reaction alpha-D-glucosamine 1-phosphate = D-glucosamine 6-phosphate. Catalyzes the conversion of glucosamine-6-phosphate to glucosamine-1-phosphate. In Blochmanniella pennsylvanica (strain BPEN), this protein is Phosphoglucosamine mutase.